Reading from the N-terminus, the 90-residue chain is UPF0329 protein ECU04_1650 (90 aa).

Belongs to the UPF0329 family.

This is UPF0329 protein ECU04_1650 from Encephalitozoon cuniculi (strain GB-M1) (Microsporidian parasite).